Here is a 348-residue protein sequence, read N- to C-terminus: DnaJ homolog subfamily B member 5 (348 aa).

Positions 4 to 68 (DYYKILGIPS…KKRGLYDQYG (65 aa)) constitute a J domain.

The sequence is that of DnaJ homolog subfamily B member 5 (DNAJB5) from Homo sapiens (Human).